The primary structure comprises 103 residues: Large ribosomal subunit protein bL21 (103 aa).

It belongs to the bacterial ribosomal protein bL21 family. Part of the 50S ribosomal subunit. Contacts protein L20.

Functionally, this protein binds to 23S rRNA in the presence of protein L20. This chain is Large ribosomal subunit protein bL21, found in Rhodococcus jostii (strain RHA1).